The sequence spans 541 residues: ATP synthase subunit alpha (541 aa).

Position 169–176 (169–176 (GDRQTGKT)) interacts with ATP. Positions 506–541 (NTLLNVEEGDTGEEENNEGHNKAEQDTEEKDTEEVV) are disordered. Composition is skewed to acidic residues over residues 512 to 521 (EEGDTGEEEN) and 531 to 541 (DTEEKDTEEVV).

Belongs to the ATPase alpha/beta chains family. As to quaternary structure, F-type ATPases have 2 components, CF(1) - the catalytic core - and CF(0) - the membrane proton channel. CF(1) has five subunits: alpha(3), beta(3), gamma(1), delta(1), epsilon(1). CF(0) has three main subunits: a(1), b(2) and c(9-12). The alpha and beta chains form an alternating ring which encloses part of the gamma chain. CF(1) is attached to CF(0) by a central stalk formed by the gamma and epsilon chains, while a peripheral stalk is formed by the delta and b chains.

It localises to the cell inner membrane. It catalyses the reaction ATP + H2O + 4 H(+)(in) = ADP + phosphate + 5 H(+)(out). Its function is as follows. Produces ATP from ADP in the presence of a proton gradient across the membrane. The alpha chain is a regulatory subunit. In Halothermothrix orenii (strain H 168 / OCM 544 / DSM 9562), this protein is ATP synthase subunit alpha.